A 745-amino-acid polypeptide reads, in one-letter code: Capsid protein (745 aa).

4 disordered regions span residues 44-64, 580-602, 638-662, and 678-699; these read RRRF…GRRK, SQAI…TLPR, EYSS…RPEG, and QDSQ…QAHQ. Over residues 681 to 692 the composition is skewed to acidic residues; sequence QDSEESQEEAPL.

It belongs to the anelloviridae capsid protein family.

The protein resides in the virion. In terms of biological role, self assemble to form an icosahedral capsid. This is Capsid protein from Torque teno virus (isolate Human/China/CT23F/2001) (TTV).